The sequence spans 744 residues: Catalase-peroxidase 3 (744 aa).

Positions 106-228 (WHFAGTYRIG…LAASEMGLIY (123 aa)) form a cross-link, tryptophyl-tyrosyl-methioninium (Trp-Tyr) (with M-254). The Proton acceptor role is filled by His-107. Residues 228–254 (YVDPQGPATLPDPLASARDIRETFRRM) constitute a cross-link (tryptophyl-tyrosyl-methioninium (Tyr-Met) (with W-106)). His-269 is a heme b binding site.

This sequence belongs to the peroxidase family. Peroxidase/catalase subfamily. Homodimer or homotetramer. Heme b is required as a cofactor. Post-translationally, formation of the three residue Trp-Tyr-Met cross-link is important for the catalase, but not the peroxidase activity of the enzyme.

The enzyme catalyses H2O2 + AH2 = A + 2 H2O. The catalysed reaction is 2 H2O2 = O2 + 2 H2O. Functionally, bifunctional enzyme with both catalase and broad-spectrum peroxidase activity. The polypeptide is Catalase-peroxidase 3 (Mycolicibacterium smegmatis (strain ATCC 700084 / mc(2)155) (Mycobacterium smegmatis)).